We begin with the raw amino-acid sequence, 339 residues long: 4-hydroxy-2-oxovalerate aldolase (339 aa).

In terms of domain architecture, Pyruvate carboxyltransferase spans 7–259 (VILHDMSLRD…QSGIDLYKIM (253 aa)). 15–16 (RD) provides a ligand contact to substrate. Asp16 lines the Mn(2+) pocket. His19 acts as the Proton acceptor in catalysis. Substrate contacts are provided by Ser169 and His198. Mn(2+) is bound by residues His198 and His200. Tyr289 contributes to the substrate binding site.

This sequence belongs to the 4-hydroxy-2-oxovalerate aldolase family.

It catalyses the reaction (S)-4-hydroxy-2-oxopentanoate = acetaldehyde + pyruvate. The polypeptide is 4-hydroxy-2-oxovalerate aldolase (Marinomonas sp. (strain MWYL1)).